The sequence spans 177 residues: ATP-dependent protease subunit HslV (177 aa).

Thr-2 is an active-site residue. Positions 158, 161, and 164 each coordinate Na(+).

Belongs to the peptidase T1B family. HslV subfamily. As to quaternary structure, a double ring-shaped homohexamer of HslV is capped on each side by a ring-shaped HslU homohexamer. The assembly of the HslU/HslV complex is dependent on binding of ATP.

The protein resides in the cytoplasm. It catalyses the reaction ATP-dependent cleavage of peptide bonds with broad specificity.. With respect to regulation, allosterically activated by HslU binding. Its function is as follows. Protease subunit of a proteasome-like degradation complex believed to be a general protein degrading machinery. The sequence is that of ATP-dependent protease subunit HslV from Pseudomonas aeruginosa (strain LESB58).